We begin with the raw amino-acid sequence, 121 residues long: Large ribosomal subunit protein uL14c (121 aa).

Belongs to the universal ribosomal protein uL14 family. In terms of assembly, part of the 50S ribosomal subunit.

Its subcellular location is the plastid. The protein resides in the chloroplast. In terms of biological role, binds to 23S rRNA. The chain is Large ribosomal subunit protein uL14c from Emiliania huxleyi (Coccolithophore).